The sequence spans 440 residues: D-serine dehydratase (440 aa).

An N6-(pyridoxal phosphate)lysine modification is found at lysine 116.

It belongs to the serine/threonine dehydratase family. DsdA subfamily. Monomer. Pyridoxal 5'-phosphate serves as cofactor.

The enzyme catalyses D-serine = pyruvate + NH4(+). This Salmonella arizonae (strain ATCC BAA-731 / CDC346-86 / RSK2980) protein is D-serine dehydratase.